A 250-amino-acid polypeptide reads, in one-letter code: 2,3-bisphosphoglycerate-dependent phosphoglycerate mutase (250 aa).

Residues 10–17 (RHGESQWN), 23–24 (TG), R62, 89–92 (ERHY), K100, 116–117 (RR), and 185–186 (GN) contribute to the substrate site. Catalysis depends on H11, which acts as the Tele-phosphohistidine intermediate. E89 functions as the Proton donor/acceptor in the catalytic mechanism.

Belongs to the phosphoglycerate mutase family. BPG-dependent PGAM subfamily. Homodimer.

The enzyme catalyses (2R)-2-phosphoglycerate = (2R)-3-phosphoglycerate. The protein operates within carbohydrate degradation; glycolysis; pyruvate from D-glyceraldehyde 3-phosphate: step 3/5. Catalyzes the interconversion of 2-phosphoglycerate and 3-phosphoglycerate. The protein is 2,3-bisphosphoglycerate-dependent phosphoglycerate mutase of Escherichia coli O139:H28 (strain E24377A / ETEC).